The following is a 113-amino-acid chain: MVEEHRDVIYVTSNYVPGYRAVEVLGFVYGLTVRSRRLGGQIDRFKSILGGEIKEYVTMMEHSRQEALERMLDHARELGANAVISVRFDSDSISDIMQEILAYGTAVIVEPEE.

Belongs to the UPF0145 family.

This chain is UPF0145 protein MTH_544, found in Methanothermobacter thermautotrophicus (strain ATCC 29096 / DSM 1053 / JCM 10044 / NBRC 100330 / Delta H) (Methanobacterium thermoautotrophicum).